Here is a 329-residue protein sequence, read N- to C-terminus: MSSTPVNVTVTGAAGQIGYALLFRIASGQLLGADTPVRLRLLEIPQAVRAAEGTALELEDSAFPLLAGVDVFDDAKRAFEGTNVALLVGARPRTKGMERGDLLSANGGIFKPQGEAINSGAAEDIRVLVVGNPANTNALIAQTHAPDVPAERFTAMTRLDHNRAIAQLAKKLGVPSAEIRKITIWGNHSATQYPDIFHAQVGGRSGAEAVGDQKWIAEEFIPRVAKRGAEIIEVRGASSAASAASAAIDHVYTWVNGTPEGDWTSAAIPSDGSYGVPEGLISSFPVTAAGGKFEIVQGLELDAFSREKIDASVRELAEEREAVRALGLI.

Residue 12–18 (GAAGQIG) coordinates NAD(+). Arg93 and Arg99 together coordinate substrate. Residues Asn106, Gln113, and 130–132 (VGN) each bind NAD(+). Positions 132 and 163 each coordinate substrate. Residue His188 is the Proton acceptor of the active site.

This sequence belongs to the LDH/MDH superfamily. MDH type 2 family.

It carries out the reaction (S)-malate + NAD(+) = oxaloacetate + NADH + H(+). In terms of biological role, catalyzes the reversible oxidation of malate to oxaloacetate. The chain is Malate dehydrogenase from Frankia alni (strain DSM 45986 / CECT 9034 / ACN14a).